The sequence spans 253 residues: Demethylmenaquinone methyltransferase (253 aa).

S-adenosyl-L-methionine-binding positions include threonine 62, aspartate 80, 102–103 (DA), and serine 119.

This sequence belongs to the class I-like SAM-binding methyltransferase superfamily. MenG/UbiE family.

It carries out the reaction a 2-demethylmenaquinol + S-adenosyl-L-methionine = a menaquinol + S-adenosyl-L-homocysteine + H(+). The protein operates within quinol/quinone metabolism; menaquinone biosynthesis; menaquinol from 1,4-dihydroxy-2-naphthoate: step 2/2. Its function is as follows. Methyltransferase required for the conversion of demethylmenaquinol (DMKH2) to menaquinol (MKH2). The sequence is that of Demethylmenaquinone methyltransferase from Paenarthrobacter aurescens (strain TC1).